Here is a 486-residue protein sequence, read N- to C-terminus: Keratin-3, type I cytoskeletal 51 kDa (486 aa).

The tract at residues Met1–Asn125 is head. Positions Glu126–Trp161 are coil 1A. Residues Glu126–Pro442 form the IF rod domain. The segment at Tyr162–Met184 is linker 1. Positions Ile185–Met276 are coil 1B. Residues Gln277–Ile299 form a linker 12 region. A coil 2 region spans residues Leu300–Asp438. The disordered stretch occupies residues Leu435–Arg466. The tract at residues Leu439–Met486 is tail. Over residues Ser449–Thr461 the composition is skewed to low complexity.

Belongs to the intermediate filament family. In terms of assembly, heterotetramer of two type I and two type II keratins.

This chain is Keratin-3, type I cytoskeletal 51 kDa, found in Xenopus laevis (African clawed frog).